Reading from the N-terminus, the 279-residue chain is Protein BASIC PENTACYSTEINE2 (279 aa).

Residues 126–167 are disordered; sequence TKKRKTNAKAGSTPKAKKPRKPKDENSNNNNNNNTNVTRVKP. The segment covering 152 to 161 has biased composition (low complexity); that stretch reads SNNNNNNNTN.

It belongs to the BBR/BPC family. Expressed in seedlings, leaves and pistils. Detected in the base of flowers and tips of carpels, in sepal and petal vasculature, in pollen grains, in young rosette, in the lateral and tip of primary roots, and in ovule at the exception of the outer integument.

It localises to the nucleus. Its function is as follows. Transcriptional regulator that specifically binds to GA-rich elements (GAGA-repeats) present in regulatory sequences of genes involved in developmental processes. This chain is Protein BASIC PENTACYSTEINE2, found in Arabidopsis thaliana (Mouse-ear cress).